Consider the following 269-residue polypeptide: MSRITTTFAKLQEEGRKALIPYITAGFPFAAITPSLMHGMVEAGADVIELGVPFSDPMADGPTIQKAGDRAIANGVGLVQVLAYVREFRQKNQTTPVVLMGYANPVERYDQIHGKDRFVDDAAEAGVDGLLIVDYPPEECEAFAAQLRARDMDLIFLLAPTSTTERMQQVARVASGYVYYVSLKGVTGSGALDTAAVEAMLPRIREHVSIPVGVGFGIRDAATAQAISRVADAVVIGSRIIEMLDGQPHEKIVPLTIDFLRGVRKALDA.

Catalysis depends on proton acceptor residues E49 and D60.

Belongs to the TrpA family. In terms of assembly, tetramer of two alpha and two beta chains.

The enzyme catalyses (1S,2R)-1-C-(indol-3-yl)glycerol 3-phosphate + L-serine = D-glyceraldehyde 3-phosphate + L-tryptophan + H2O. The protein operates within amino-acid biosynthesis; L-tryptophan biosynthesis; L-tryptophan from chorismate: step 5/5. The alpha subunit is responsible for the aldol cleavage of indoleglycerol phosphate to indole and glyceraldehyde 3-phosphate. This Delftia acidovorans (strain DSM 14801 / SPH-1) protein is Tryptophan synthase alpha chain.